Reading from the N-terminus, the 940-residue chain is UvrABC system protein A (940 aa).

31–38 provides a ligand contact to ATP; it reads GLSGSGKS. The segment at 252 to 279 adopts a C4-type zinc-finger fold; the sequence is CPHCGYSMQELEPRLFSFNNPAGACGTC. 2 consecutive ABC transporter domains span residues 309-586 and 606-936; these read WDQK…PDSL and RDKN…RFLK. ATP is bound at residue 639–646; sequence GVSGSGKS. The segment at 739–765 adopts a C4-type zinc-finger fold; sequence CEACQGDGVIKVEMHFLPDVYVPCDVC.

The protein belongs to the ABC transporter superfamily. UvrA family. Forms a heterotetramer with UvrB during the search for lesions.

The protein resides in the cytoplasm. The UvrABC repair system catalyzes the recognition and processing of DNA lesions. UvrA is an ATPase and a DNA-binding protein. A damage recognition complex composed of 2 UvrA and 2 UvrB subunits scans DNA for abnormalities. When the presence of a lesion has been verified by UvrB, the UvrA molecules dissociate. This is UvrABC system protein A from Vibrio vulnificus (strain CMCP6).